We begin with the raw amino-acid sequence, 405 residues long: Tryptophan synthase beta chain (405 aa).

K96 bears the N6-(pyridoxal phosphate)lysine mark.

Belongs to the TrpB family. Tetramer of two alpha and two beta chains. The cofactor is pyridoxal 5'-phosphate.

It catalyses the reaction (1S,2R)-1-C-(indol-3-yl)glycerol 3-phosphate + L-serine = D-glyceraldehyde 3-phosphate + L-tryptophan + H2O. It participates in amino-acid biosynthesis; L-tryptophan biosynthesis; L-tryptophan from chorismate: step 5/5. Its function is as follows. The beta subunit is responsible for the synthesis of L-tryptophan from indole and L-serine. The sequence is that of Tryptophan synthase beta chain from Clostridium botulinum (strain Eklund 17B / Type B).